Consider the following 1598-residue polypeptide: Structural maintenance of chromosomes flexible hinge domain-containing protein GMI1 (1598 aa).

The disordered stretch occupies residues 1191–1218 (VTSAPTSEREESGYSTPHSKTTPPPESG). 2 coiled-coil regions span residues 1258–1301 (TEDL…ASLE) and 1565–1595 (EEMM…FTAM).

Highly expressed in closed buds and open flowers. Expressed at low levels in roots, stems, cauline leaves and siliques. Expressed in the region of the shoot and floral meristems.

The protein resides in the nucleus. Its function is as follows. Contributes to DNA double-strand break (DSB) repair via somatic homologous recombination. Functions downstream of ATM. The protein is Structural maintenance of chromosomes flexible hinge domain-containing protein GMI1 of Arabidopsis thaliana (Mouse-ear cress).